Consider the following 260-residue polypeptide: Transcription repressor OFP13 (260 aa).

The region spanning 150-211 (VAMESEDPYG…VSAFVDLLSG (62 aa)) is the OVATE domain.

As to expression, expressed in roots, rosette and cauline leaves, shoots, stems, flower buds and siliques.

It is found in the nucleus. Functionally, transcriptional repressor that regulates multiple aspects of plant growth and development through the regulation of BEL1-LIKE (BLH) and KNOX TALE (KNAT) homeodomain transcription factors. In Arabidopsis thaliana (Mouse-ear cress), this protein is Transcription repressor OFP13 (OFP13).